Consider the following 232-residue polypeptide: Small ribosomal subunit protein uS2 (232 aa).

It belongs to the universal ribosomal protein uS2 family.

In Alkaliphilus oremlandii (strain OhILAs) (Clostridium oremlandii (strain OhILAs)), this protein is Small ribosomal subunit protein uS2.